Reading from the N-terminus, the 301-residue chain is uncharacterized protein (301 aa).

An HTH lysR-type domain is found at 1-58; sequence MDIRHLTYFLEVARLKSFTKASQSLYVSQPTISKMIKNLEEELGIELFYRNGRQVELT. Positions 18 to 37 form a DNA-binding region, H-T-H motif; that stretch reads FTKASQSLYVSQPTISKMIK.

The protein belongs to the LysR transcriptional regulatory family.

This is an uncharacterized protein from Bacillus subtilis (strain 168).